The sequence spans 477 residues: Adenosylhomocysteinase (477 aa).

Positions 63, 142, and 202 each coordinate substrate. Residue 203 to 205 (TTT) participates in NAD(+) binding. Residues Lys232 and Asp236 each coordinate substrate. Residues Asn237, 266–271 (GYGDVG), Glu289, Asn324, 345–347 (IGH), and Asn390 contribute to the NAD(+) site.

The protein belongs to the adenosylhomocysteinase family. It depends on NAD(+) as a cofactor.

It is found in the cytoplasm. The catalysed reaction is S-adenosyl-L-homocysteine + H2O = L-homocysteine + adenosine. It participates in amino-acid biosynthesis; L-homocysteine biosynthesis; L-homocysteine from S-adenosyl-L-homocysteine: step 1/1. In terms of biological role, may play a key role in the regulation of the intracellular concentration of adenosylhomocysteine. The chain is Adenosylhomocysteinase from Methylibium petroleiphilum (strain ATCC BAA-1232 / LMG 22953 / PM1).